Reading from the N-terminus, the 513-residue chain is Bifunctional pantoate ligase/cytidylate kinase (513 aa).

The interval 1 to 283 is pantoate--beta-alanine ligase; it reads MVQVFRTIAG…VGSTRLIDNL (283 aa). 30–37 lines the ATP pocket; that stretch reads MGSLHAGH. The active-site Proton donor is the H37. Q61 contributes to the (R)-pantoate binding site. Position 61 (Q61) interacts with beta-alanine. 150 to 153 is an ATP binding site; that stretch reads GAKD. Q156 contacts (R)-pantoate. Residues V179 and 187 to 190 contribute to the ATP site; that span reads MSSR. Residues 284-513 are cytidylate kinase; it reads VLNHRLPIIA…IELYKKYNKG (230 aa).

This sequence in the N-terminal section; belongs to the pantothenate synthetase family. The protein in the C-terminal section; belongs to the cytidylate kinase family. Type 1 subfamily.

It localises to the cytoplasm. It catalyses the reaction (R)-pantoate + beta-alanine + ATP = (R)-pantothenate + AMP + diphosphate + H(+). The catalysed reaction is CMP + ATP = CDP + ADP. The enzyme catalyses dCMP + ATP = dCDP + ADP. It functions in the pathway cofactor biosynthesis; (R)-pantothenate biosynthesis; (R)-pantothenate from (R)-pantoate and beta-alanine: step 1/1. In terms of biological role, catalyzes the condensation of pantoate with beta-alanine in an ATP-dependent reaction via a pantoyl-adenylate intermediate. Its function is as follows. Catalyzes the transfer of a phosphate group from ATP to either CMP or dCMP to form CDP or dCDP and ADP, respectively. The polypeptide is Bifunctional pantoate ligase/cytidylate kinase (Synechocystis sp. (strain ATCC 27184 / PCC 6803 / Kazusa)).